We begin with the raw amino-acid sequence, 869 residues long: DNA mismatch repair protein MutS (869 aa).

618 to 625 (GPNMGGKS) is a binding site for ATP.

It belongs to the DNA mismatch repair MutS family.

Its function is as follows. This protein is involved in the repair of mismatches in DNA. It is possible that it carries out the mismatch recognition step. This protein has a weak ATPase activity. In Zymomonas mobilis subsp. mobilis (strain ATCC 31821 / ZM4 / CP4), this protein is DNA mismatch repair protein MutS.